We begin with the raw amino-acid sequence, 395 residues long: Nickel and cobalt resistance protein CnrB (395 aa).

A helical membrane pass occupies residues 13–33; that stretch reads MIAGVAAVAAAVGFGAAHLPV. Positions 35–55 are disordered; that stretch reads EKSPASTQAPEAQKPQSAPVK. The span at 37-50 shows a compositional bias: polar residues; it reads SPASTQAPEAQKPQ. Residues 140–193 are a coiled coil; the sequence is AAERKVAQAKADLARKTYEREASLFQQGVTPRQEMEAAKAALDVAQAEALRAAT.

This sequence belongs to the membrane fusion protein (MFP) (TC 8.A.1) family.

It localises to the cell inner membrane. The products of the genes cnrA, cnrB, and cnrC are likely to form a membrane-bound protein complex catalyzing an energy-dependent efflux of Ni(2+) and Co(2+). The mechanism of action of the CnrCBA complex may be that of a proton/cation antiporter. The protein is Nickel and cobalt resistance protein CnrB (cnrB) of Cupriavidus metallidurans (strain ATCC 43123 / DSM 2839 / NBRC 102507 / CH34) (Ralstonia metallidurans).